Here is a 60-residue protein sequence, read N- to C-terminus: Large ribosomal subunit protein bL32 (60 aa).

Residues 1-21 form a disordered region; that stretch reads MAVPRNRHSNARKNIRRSHDA.

The protein belongs to the bacterial ribosomal protein bL32 family.

In Chlamydia felis (strain Fe/C-56) (Chlamydophila felis), this protein is Large ribosomal subunit protein bL32.